Reading from the N-terminus, the 123-residue chain is MTVIYQTTITRIGASATDALSDQMLITFREGAPADLEEYCFIHCHGELKGALHPGLQFSLGQHRYPVTAVGSVAEDNLRELGHVTLRFDGLNEAEFPGTVHVAGPVPDDIAPGSVLKFESVKE.

In terms of domain architecture, PTS EIIA type-5 spans 1 to 116 (MTVIYQTTIT…PDDIAPGSVL (116 aa)). Histidine 43 (tele-phosphohistidine intermediate) is an active-site residue. Histidine 43 carries the phosphohistidine; by HPr modification.

It localises to the cytoplasm. Its function is as follows. The phosphoenolpyruvate-dependent sugar phosphotransferase system (sugar PTS), a major carbohydrate active transport system, catalyzes the phosphorylation of incoming sugar substrates concomitantly with their translocation across the cell membrane. The enzyme II complex composed of SrlA, SrlB and SrlE is involved in glucitol/sorbitol transport. This is PTS system glucitol/sorbitol-specific EIIA component (srlB) from Shigella flexneri.